The following is a 260-amino-acid chain: HTH-type transcriptional repressor NanR (260 aa).

One can recognise an HTH gntR-type domain in the interval 27 to 95 (KKLSEMVEEE…NGERARISRP (69 aa)). A DNA-binding region (H-T-H motif) is located at residues 55 to 74 (ERELMAFFNVGRPSVREALA).

Belongs to the NanR family.

Transcriptional repressor that controls expression of the genes required for the catabolism of sialic acids. This is HTH-type transcriptional repressor NanR from Edwardsiella tarda (strain FL6-60).